Here is a 385-residue protein sequence, read N- to C-terminus: Cyclin-A3-2 (385 aa).

The tract at residues 1–110 (MADKENSTPA…STSTASPSSG (110 aa)) is disordered. Low complexity-rich tracts occupy residues 7 to 41 (STPA…GAPP), 74 to 88 (PSSK…AAAP), and 96 to 110 (PVSS…PSSG).

It belongs to the cyclin family. Cyclin AB subfamily.

The chain is Cyclin-A3-2 (CYCA3-2) from Oryza sativa subsp. japonica (Rice).